The sequence spans 457 residues: Ribosomal protein uS12 methylthiotransferase RimO (457 aa).

Residues 9–128 (KKVHFISLGC…ILKNSDEGEK (120 aa)) enclose the MTTase N-terminal domain. Cys18, Cys54, Cys88, Cys163, Cys167, and Cys170 together coordinate [4Fe-4S] cluster. A Radical SAM core domain is found at 149–384 (SQPGHRAYLK…MEVQQNISRE (236 aa)). A TRAM domain is found at 387-455 (SDFVGKTLQV…EYDLIGEIVV (69 aa)).

The protein belongs to the methylthiotransferase family. RimO subfamily. [4Fe-4S] cluster serves as cofactor.

It localises to the cytoplasm. The enzyme catalyses L-aspartate(89)-[ribosomal protein uS12]-hydrogen + (sulfur carrier)-SH + AH2 + 2 S-adenosyl-L-methionine = 3-methylsulfanyl-L-aspartate(89)-[ribosomal protein uS12]-hydrogen + (sulfur carrier)-H + 5'-deoxyadenosine + L-methionine + A + S-adenosyl-L-homocysteine + 2 H(+). Its function is as follows. Catalyzes the methylthiolation of an aspartic acid residue of ribosomal protein uS12. The sequence is that of Ribosomal protein uS12 methylthiotransferase RimO from Bdellovibrio bacteriovorus (strain ATCC 15356 / DSM 50701 / NCIMB 9529 / HD100).